The following is a 294-amino-acid chain: Cell division control protein 2 homolog A (294 aa).

Residues 4-287 (YEKVEKIGEG…ARNALQHEYF (284 aa)) form the Protein kinase domain. Residues 10–18 (IGEGTYGVV) and lysine 33 each bind ATP. The residue at position 14 (threonine 14) is a Phosphothreonine. Tyrosine 15 is modified (phosphotyrosine). Aspartate 127 (proton acceptor) is an active-site residue. Residue threonine 161 is modified to Phosphothreonine; by CAK.

It belongs to the protein kinase superfamily. CMGC Ser/Thr protein kinase family. CDC2/CDKX subfamily.

It carries out the reaction L-seryl-[protein] + ATP = O-phospho-L-seryl-[protein] + ADP + H(+). It catalyses the reaction L-threonyl-[protein] + ATP = O-phospho-L-threonyl-[protein] + ADP + H(+). The enzyme catalyses [DNA-directed RNA polymerase] + ATP = phospho-[DNA-directed RNA polymerase] + ADP + H(+). Phosphorylation at Thr-14 or Tyr-15 inactivates the enzyme, while phosphorylation at Thr-161 activates it. Functionally, plays a key role in the control of the eukaryotic cell cycle. This is Cell division control protein 2 homolog A (CDC2A) from Antirrhinum majus (Garden snapdragon).